We begin with the raw amino-acid sequence, 384 residues long: Guanine nucleotide-binding protein alpha-1 subunit (384 aa).

A lipid anchor (N-myristoyl glycine) is attached at Gly2. The S-palmitoyl cysteine moiety is linked to residue Cys5. Positions 38–384 (HIQKLLLLGA…RRNLFEAGLL (347 aa)) constitute a G-alpha domain. Positions 41–54 (KLLLLGAGESGKST) are G1 motif. GTP-binding residues include Glu49, Ser50, Gly51, Lys52, Ser53, Thr54, Leu188, Tyr189, Thr194, Gly222, Asn288, Lys289, Asp291, and Ala356. Residue Ser53 coordinates Mg(2+). Residues 186–194 (DVLYARVRT) are G2 motif. Thr194 lines the Mg(2+) pocket. The interval 215–224 (YRLFDVGGQR) is G3 motif. Positions 284–291 (MLFLNKFD) are G4 motif. The interval 354 to 359 (TTALDQ) is G5 motif.

It belongs to the G-alpha family. In terms of assembly, g proteins are composed of 3 units; alpha, beta and gamma. The alpha chain contains the guanine nucleotide binding site. Mg(2+) is required as a cofactor.

Functionally, guanine nucleotide-binding proteins (G proteins) are involved as modulators or transducers in various transmembrane signaling systems. In Lupinus luteus (European yellow lupine), this protein is Guanine nucleotide-binding protein alpha-1 subunit (GPA1).